The chain runs to 273 residues: Endochitinase EP3 (273 aa).

A signal peptide spans 1-28 (MLTPTISKSISLVTILLVLQAFSNTTKA). Residue Asn24 is glycosylated (N-linked (GlcNAc...) asparagine). Residues 29–63 (QNCGCSSELCCSQFGFCGNTSDYCGVGCQQGPCFA) form the Chitin-binding type-1 domain. 4 disulfides stabilise this stretch: Cys31/Cys39, Cys33/Cys45, Cys38/Cys52, and Cys56/Cys61. Asn47 is a glycosylation site (N-linked (GlcNAc...) asparagine). A catalytic region spans residues 70–273 (VSVAEIVTQE…GVDPGNNLTC (204 aa)). The active-site Proton donor is Glu136. Asn157 and Asn270 each carry an N-linked (GlcNAc...) asparagine glycan.

The protein belongs to the glycosyl hydrolase 19 family. Chitinase class I subfamily. In terms of tissue distribution, expressed in cells surrounding embryos, stems, seedlings, pollen, roots, shoots, inflorescence, flowers, siliques and leaves. Present in seedpods and seed embryos, but not in roots, inflorescence stems, leaves and flowers.

It carries out the reaction Random endo-hydrolysis of N-acetyl-beta-D-glucosaminide (1-&gt;4)-beta-linkages in chitin and chitodextrins.. Its function is as follows. Probably involved in hypersensitive reaction upon Xanthomonas campestris infection. The sequence is that of Endochitinase EP3 from Arabidopsis thaliana (Mouse-ear cress).